The chain runs to 111 residues: C-X-C motif chemokine 14 (111 aa).

Residues 1–34 (MSLLPRRAPPVSMRLLAAALLLLLLALYTARVDG) form the signal peptide. Intrachain disulfides connect cysteine 37–cysteine 63 and cysteine 39–cysteine 84. The D-box motif lies at 67 to 81 (MVIITTKSVSRYRGQ).

It belongs to the intercrine alpha (chemokine CxC) family. Post-translationally, ubiquitinated, followed by degradation by the proteasome. In terms of tissue distribution, expressed in heart, brain, placenta, lung, liver, skeletal muscle, kidney and pancreas. Highly expressed in normal tissue without inflammatory stimuli and infrequently expressed in cancer cell lines. Weakly expressed in monocyte-derived dendritic cells. Not detected in lung or unstimulated peripheral blood lymphocytes.

It is found in the secreted. In terms of biological role, potent chemoattractant for neutrophils, and weaker for dendritic cells. Not chemotactic for T-cells, B-cells, monocytes, natural killer cells or granulocytes. Does not inhibit proliferation of myeloid progenitors in colony formation assays. This Homo sapiens (Human) protein is C-X-C motif chemokine 14 (CXCL14).